The following is a 150-amino-acid chain: Non-structural protein (150 aa).

Residues 93 to 140 (PLFRIRFLLLIMSDSISLTDITISPGTLYSARTLLLRAAVLALTRKPM) form an apoptotic activity region.

Functionally, disrupts the host mitochondrial membrane potential and induces apoptosis probably by inducing host CASP8 and CASP9. The polypeptide is Non-structural protein (Bos taurus (Bovine)).